Consider the following 559-residue polypeptide: Cation/calcium exchanger 2 (559 aa).

13 consecutive transmembrane segments (helical) span residues 10–30 (FGYLTVTFLLVISCLLLGFFT), 86–106 (GFPILGQFLLFLWLLLLFYLL), 131–151 (VAGVTLLSLGNGAPDLFASLV), 167–187 (TVVGGSGFVTCVVVGIISISL), 203–223 (ICFFCAAIGSLALILVYGKIN), 224–244 (FWGALGFCSLYAVYVAFVVLS), 331–351 (WSKPLAVASVTFAPVLLSFLW), 362–382 (AGVVYLIGCLIGIALGFIAGA), 393–413 (WLLPWLAGGFVMSMTWSYISA), 416–436 (LVALLTSLGYIFGVSPSILGL), 480–500 (FALGISLVGCAWEAYPLSIVI), 506–526 (LLESLGFLVAGLVWSFLVLFS), and 531–551 (LGGVMGIGLLVIYLASLSLRI).

This sequence belongs to the Ca(2+):cation antiporter (CaCA) (TC 2.A.19) family. Cation/calcium exchanger (CCX) subfamily.

It is found in the membrane. Membrane-localized H(+)-dependent K(+) and Na(+) transporter. This is Cation/calcium exchanger 2 (CCX2) from Arabidopsis thaliana (Mouse-ear cress).